Reading from the N-terminus, the 404-residue chain is Glycosylated lysosomal membrane protein B (404 aa).

Positions Met1–Gly24 are cleaved as a signal peptide. The Lumenal portion of the chain corresponds to Gln25–Ser364. Residues Asn85, Asn124, Asn128, Asn142, Asn152, Asn156, Asn163, Asn168, Asn178, Asn189, Asn205, Asn221, Asn266, Asn303, and Asn330 are each glycosylated (N-linked (GlcNAc...) asparagine). Residues Ile365–Gly385 form a helical membrane-spanning segment. Over Thr386 to Asn404 the chain is Cytoplasmic. A Lysosomal targeting motif motif is present at residues Tyr400 to Asn404.

Belongs to the GLMP family. As to quaternary structure, interacts (via lumenal domain) with lysosomal protein MFSD1; the interaction starts while both proteins are still in the endoplasmic reticulum and is required for stabilization of MFSD1 in lysosomes but has no direct effect on its targeting to lysosomes or transporter activity.

The protein resides in the lysosome membrane. Required to protect lysosomal transporter MFSD1 from lysosomal proteolysis and for MFSD1 lysosomal localization. The chain is Glycosylated lysosomal membrane protein B (glmp-b) from Xenopus laevis (African clawed frog).